A 265-amino-acid polypeptide reads, in one-letter code: Gamma-secretase subunit APH-1A (265 aa).

The Lumenal portion of the chain corresponds to 1–2; it reads MG. A helical membrane pass occupies residues 3–23; that stretch reads AAVFFGCTFVAFGPAFALFLI. Topologically, residues 24 to 31 are cytoplasmic; it reads TVAGDPLR. The chain crosses the membrane as a helical span at residues 32-52; it reads VIILVAGAFFWLVSLLLASVV. Over 53–68 the chain is Lumenal; the sequence is WFILVHVTDRSDARLQ. The chain crosses the membrane as a helical span at residues 69–89; it reads YGLLIFGAAVSVLLQEVFRFA. Residues 90–118 are Cytoplasmic-facing; that stretch reads YYKLLKKADEGLASLSEDGRSPISIRQMA. The chain crosses the membrane as a helical span at residues 119–139; the sequence is YVSGLSFGIISGVFSVINILA. The Lumenal segment spans residues 140–158; that stretch reads DALGPGVVGIHGDSPYYFL. Residues 159 to 179 traverse the membrane as a helical segment; it reads TSAFLTAAIILLHTFWGVVFF. Residues 180–186 lie on the Cytoplasmic side of the membrane; that stretch reads DACERRR. A helical transmembrane segment spans residues 187–207; it reads YWALGLVVGSHLLTSGLTFLN. Residues 208–213 are Lumenal-facing; sequence PWYEAS. Residues 214–234 traverse the membrane as a helical segment; the sequence is LLPIYAVTVSMGLWAFITAGG. The Cytoplasmic segment spans residues 235 to 265; it reads SLRSIQRSLLCRRQEDSRVMVYSALRIPPED.

The protein belongs to the APH-1 family. In terms of assembly, the functional gamma-secretase complex is composed of at least four polypeptides: a presenilin homodimer (PSEN1 or PSEN2), nicastrin (NCSTN), APH1 (APH1A or APH1B) and PSENEN/PEN2. Widely expressed. Expressed in leukocytes, lung, placenta, small intestine, liver, kidney, spleen thymus, skeletal muscle, heart and brain. Isoform 1 and isoform 2 are nearly expressed at the same level.

Its subcellular location is the endoplasmic reticulum membrane. It localises to the golgi apparatus. The protein resides in the golgi stack membrane. Its function is as follows. Non-catalytic subunit of the gamma-secretase complex, an endoprotease complex that catalyzes the intramembrane cleavage of integral membrane proteins such as Notch receptors and APP (amyloid-beta precursor protein). Required for normal gamma-secretase assembly. The gamma-secretase complex plays a role in Notch and Wnt signaling cascades and regulation of downstream processes via its role in processing key regulatory proteins, and by regulating cytosolic CTNNB1 levels. The protein is Gamma-secretase subunit APH-1A (APH1A) of Homo sapiens (Human).